The following is a 540-amino-acid chain: MSLRNRLSKSGENPEQDEAQKNFMDTYRNGHITMKQLIAKKRLLAAEAEELKPLFMKEVGCHFDDFVTNLIEKSASLDNGGCALTTFSILEEMKKNHRAKDLRAPPEQGKIFISRQSLLDELFEVDHIRTIYHMFIALLILFVLSTIVVDYIDEGRLVLEFNLLAYAFGKFPTVIWTWWAMFLSTLSIPYFLFQRWAHGYSKSSHPLIYSLVHGLLFLVFQLGVLGFVPTYVVLAYTLPPASRFILILEQIRLIMKAHSFVRENIPRVLNAAKEKSSKDPLPTVNQYLYFLFAPTLIYRDNYPRTPTVRWGYVAMQFLQVFGCLFYVYYIFERLCAPLFRNIKQEPFSARVLVLCVFNSILPGVLILFLSFFAFLHCWLNAFAEMLRFGDRMFYKDWWNSTSYSNYYRTWNVVVHDWLYYYVYKDLLWFFSKRFKSAAMLAVFALSAVVHEYALAICLSYFYPVLFVLFMFFGMAFNFIVNDSRKRPIWNIMVWASLFLGYGLILCFYSQEWYARQHCPLKNPTFLDYVRPRTWTCRYVF.

The tract at residues 1–20 (MSLRNRLSKSGENPEQDEAQ) is disordered. Residues 1–128 (MSLRNRLSKS…LDELFEVDHI (128 aa)) lie on the Cytoplasmic side of the membrane. Ser-2 is modified (phosphoserine). His-127 is a cholesterol binding site. The helical transmembrane segment at 129–150 (RTIYHMFIALLILFVLSTIVVD) threads the bilayer. Over 151–170 (YIDEGRLVLEFNLLAYAFGK) the chain is Lumenal. A helical membrane pass occupies residues 171–196 (FPTVIWTWWAMFLSTLSIPYFLFQRW). Residues 197-208 (AHGYSKSSHPLI) are Cytoplasmic-facing. A helical transmembrane segment spans residues 209 to 234 (YSLVHGLLFLVFQLGVLGFVPTYVVL). The Lumenal portion of the chain corresponds to 235–242 (AYTLPPAS). The chain crosses the membrane as a helical span at residues 243 to 266 (RFILILEQIRLIMKAHSFVRENIP). Over 267 to 309 (RVLNAAKEKSSKDPLPTVNQYLYFLFAPTLIYRDNYPRTPTVR) the chain is Cytoplasmic. The helical transmembrane segment at 310–342 (WGYVAMQFLQVFGCLFYVYYIFERLCAPLFRNI) threads the bilayer. Residues 343–359 (KQEPFSARVLVLCVFNS) lie on the Lumenal side of the membrane. Residues 360 to 385 (ILPGVLILFLSFFAFLHCWLNAFAEM) form a helical membrane-spanning segment. Topologically, residues 386–433 (LRFGDRMFYKDWWNSTSYSNYYRTWNVVVHDWLYYYVYKDLLWFFSKR) are cytoplasmic. Residues 393 to 399 (FYKDWWN) carry the FYXDWWN motif motif. An acyl-CoA-binding residues include Asn-405, Arg-408, Asn-411, His-415, Tyr-423, Lys-435, and Ser-446. A helical transmembrane segment spans residues 434-458 (FKSAAMLAVFALSAVVHEYALAICL). The active site involves His-450. Topologically, residues 459–464 (SYFYPV) are lumenal. A helical transmembrane segment spans residues 465–480 (LFVLFMFFGMAFNFIV). Residues 481-486 (NDSRKR) lie on the Cytoplasmic side of the membrane. A helical transmembrane segment spans residues 487–518 (PIWNIMVWASLFLGYGLILCFYSQEWYARQHC). Cys-518 and Cys-536 form a disulfide bridge. Topologically, residues 519 to 540 (PLKNPTFLDYVRPRTWTCRYVF) are lumenal.

The protein belongs to the membrane-bound acyltransferase family. Sterol o-acyltransferase subfamily. As to quaternary structure, may form homo- or heterodimers. Interacts with UBIAD1.

The protein resides in the endoplasmic reticulum membrane. It catalyses the reaction a sterol + a long-chain fatty acyl-CoA = a long-chain 3-hydroxysterol ester + CoA. The enzyme catalyses cholesterol + an acyl-CoA = a cholesterol ester + CoA. The catalysed reaction is cholesterol + (9Z)-octadecenoyl-CoA = cholesteryl (9Z-octadecenoate) + CoA. It carries out the reaction cholesterol + hexadecanoyl-CoA = cholesteryl hexadecanoate + CoA. It catalyses the reaction octadecanoyl-CoA + cholesterol = cholesteryl octadecanoate + CoA. The enzyme catalyses (9Z,12Z)-octadecadienoyl-CoA + cholesterol = cholesteryl (9Z,12Z)-octadecadienoate + CoA. The catalysed reaction is (5Z,8Z,11Z,14Z)-eicosatetraenoyl-CoA + cholesterol = cholesteryl (5Z,8Z,11Z,14Z)-eicosatetraenoate + CoA. It carries out the reaction (9Z)-hexadecenoyl-CoA + cholesterol = cholesteryl (9Z)-hexadecenoate + CoA. It catalyses the reaction (11Z)-octadecenoyl-CoA + cholesterol = cholesteryl (11Z)-octadecenoate + CoA. The enzyme catalyses (7Z)-octadecenoyl-CoA + cholesterol = cholesteryl (7Z)-octadecenoate + CoA. Functionally, catalyzes the formation of fatty acid-cholesterol esters, which are less soluble in membranes than cholesterol. Plays a role in lipoprotein assembly and dietary cholesterol absorption. Preferentially utilizes oleoyl-CoA ((9Z)-octadecenoyl-CoA) as a substrate: shows a higher activity towards an acyl-CoA substrate with a double bond at the delta-9 position (9Z) than towards saturated acyl-CoA or an unsaturated acyl-CoA with a double bond at the delta-7 (7Z) or delta-11 (11Z) positions. This is Sterol O-acyltransferase 1 from Mus musculus (Mouse).